Here is a 95-residue protein sequence, read N- to C-terminus: Aspartyl/glutamyl-tRNA(Asn/Gln) amidotransferase subunit C (95 aa).

This sequence belongs to the GatC family. In terms of assembly, heterotrimer of A, B and C subunits.

The enzyme catalyses L-glutamyl-tRNA(Gln) + L-glutamine + ATP + H2O = L-glutaminyl-tRNA(Gln) + L-glutamate + ADP + phosphate + H(+). It catalyses the reaction L-aspartyl-tRNA(Asn) + L-glutamine + ATP + H2O = L-asparaginyl-tRNA(Asn) + L-glutamate + ADP + phosphate + 2 H(+). Its function is as follows. Allows the formation of correctly charged Asn-tRNA(Asn) or Gln-tRNA(Gln) through the transamidation of misacylated Asp-tRNA(Asn) or Glu-tRNA(Gln) in organisms which lack either or both of asparaginyl-tRNA or glutaminyl-tRNA synthetases. The reaction takes place in the presence of glutamine and ATP through an activated phospho-Asp-tRNA(Asn) or phospho-Glu-tRNA(Gln). In Pseudomonas entomophila (strain L48), this protein is Aspartyl/glutamyl-tRNA(Asn/Gln) amidotransferase subunit C.